We begin with the raw amino-acid sequence, 66 residues long: Photosystem II reaction center protein H (66 aa).

A helical membrane pass occupies residues 27 to 47; it reads GAVPVMTVIGLLLLVFLVILL.

The protein belongs to the PsbH family. In terms of assembly, PSII is composed of 1 copy each of membrane proteins PsbA, PsbB, PsbC, PsbD, PsbE, PsbF, PsbH, PsbI, PsbJ, PsbK, PsbL, PsbM, PsbT, PsbX, PsbY, Psb30/Ycf12, peripheral proteins PsbO, CyanoQ (PsbQ), PsbU, PsbV and a large number of cofactors. It forms dimeric complexes.

The protein resides in the cellular thylakoid membrane. Functionally, one of the components of the core complex of photosystem II (PSII), required for its stability and/or assembly. PSII is a light-driven water:plastoquinone oxidoreductase that uses light energy to abstract electrons from H(2)O, generating O(2) and a proton gradient subsequently used for ATP formation. It consists of a core antenna complex that captures photons, and an electron transfer chain that converts photonic excitation into a charge separation. The sequence is that of Photosystem II reaction center protein H from Prochlorococcus marinus (strain MIT 9215).